The sequence spans 448 residues: Rhodanese-like domain-containing protein 8, chloroplastic (448 aa).

The N-terminal 23 residues, 1 to 23 (MRVSPAATLSVSLTTPLPITLTK), are a transit peptide targeting the chloroplast. A Rhodanese domain is found at 220 to 323 (SGKSYILLDV…YLKEEGTAEW (104 aa)). Cys-283 serves as the catalytic Cysteine persulfide intermediate.

The protein resides in the plastid. Its subcellular location is the chloroplast. The chain is Rhodanese-like domain-containing protein 8, chloroplastic (STR8) from Arabidopsis thaliana (Mouse-ear cress).